A 241-amino-acid polypeptide reads, in one-letter code: Triosephosphate isomerase (241 aa).

9 to 11 (NWK) lines the substrate pocket. Histidine 96 acts as the Electrophile in catalysis. Glutamate 165 functions as the Proton acceptor in the catalytic mechanism. Residues glycine 171, serine 204, and 225–226 (GG) contribute to the substrate site.

It belongs to the triosephosphate isomerase family. As to quaternary structure, homodimer.

The protein localises to the cytoplasm. It catalyses the reaction D-glyceraldehyde 3-phosphate = dihydroxyacetone phosphate. It participates in carbohydrate biosynthesis; gluconeogenesis. The protein operates within carbohydrate degradation; glycolysis; D-glyceraldehyde 3-phosphate from glycerone phosphate: step 1/1. In terms of biological role, involved in the gluconeogenesis. Catalyzes stereospecifically the conversion of dihydroxyacetone phosphate (DHAP) to D-glyceraldehyde-3-phosphate (G3P). The sequence is that of Triosephosphate isomerase from Trichodesmium erythraeum (strain IMS101).